A 731-amino-acid polypeptide reads, in one-letter code: Wall-associated receptor kinase-like 5 (731 aa).

The signal sequence occupies residues 1 to 26 (MKTKTYRFVCLVASVLTLQLMNGSSA). Topologically, residues 27–360 (ATPPPPPNSK…PAKPLVLQGV (334 aa)) are extracellular. N-linked (GlcNAc...) asparagine glycosylation is found at Asn37, Asn43, Asn73, Asn96, Asn124, Asn137, Asn236, and Asn272. An atypical EGF-like region spans residues 285–342 (CLCEYGYFSEMSYRNCYCSLGFTGNPYLRGGCIDNDDCKGPNICEEGTCVNVPGGYRC). 3 disulfide bridges follow: Cys287/Cys300, Cys322/Cys333, and Cys328/Cys342. A helical membrane pass occupies residues 361–381 (LLGLMGLLFLVVGTLGLIIFI). At 382–731 (KKRRRIISSR…EDQVMEISRE (350 aa)) the chain is on the cytoplasmic side. A Protein kinase domain is found at 432–705 (FSVKRVLGKG…REASLELERI (274 aa)). ATP-binding positions include 438-446 (LGKGSQGTV) and Lys460. Tyr505 is modified (phosphotyrosine). The active-site Proton acceptor is the Asp557. Thr591 and Thr596 each carry phosphothreonine. At Tyr604 the chain carries Phosphotyrosine. Residues 709–731 (PEDLEAHIENDDEEDQVMEISRE) are disordered.

The protein belongs to the protein kinase superfamily. Ser/Thr protein kinase family. Preferentially expressed in roots and flowers.

It localises to the membrane. It catalyses the reaction L-seryl-[protein] + ATP = O-phospho-L-seryl-[protein] + ADP + H(+). The catalysed reaction is L-threonyl-[protein] + ATP = O-phospho-L-threonyl-[protein] + ADP + H(+). In terms of biological role, serine/threonine-protein kinase that may function as a signaling receptor of extracellular matrix component. May be involved in plant's response to pathogen infection. The sequence is that of Wall-associated receptor kinase-like 5 (WAKL5) from Arabidopsis thaliana (Mouse-ear cress).